We begin with the raw amino-acid sequence, 497 residues long: Zinc metalloproteinase nas-28 (497 aa).

The N-terminal stretch at 1 to 14 (MFFPVVFFIPFVLG) is a signal peptide. The propeptide occupies 15-120 (APTQKALEKI…IENGNYRSKR (106 aa)). N-linked (GlcNAc...) asparagine glycosylation occurs at asparagine 76. The Peptidase M12A domain maps to 121–319 (QAIVDTTNFW…IGVNKLYNCT (199 aa)). Disulfide bonds link cysteine 164–cysteine 318, cysteine 185–cysteine 206, cysteine 328–cysteine 339, cysteine 331–cysteine 342, cysteine 344–cysteine 353, cysteine 364–cysteine 398, and cysteine 427–cysteine 447. Histidine 214 is a binding site for Zn(2+). Glutamate 215 is an active-site residue. Residues histidine 218 and histidine 224 each coordinate Zn(2+). A glycan (N-linked (GlcNAc...) asparagine) is linked at asparagine 317. In terms of domain architecture, EGF-like spans 324 to 354 (IQMKCSNCGITDSRNCNQCKCPRYFTGASCD). One can recognise a CUB domain in the interval 364 to 483 (CNGAVLQATS…LTFSIQYRAV (120 aa)). The N-linked (GlcNAc...) asparagine glycan is linked to asparagine 394.

It depends on Zn(2+) as a cofactor.

It localises to the secreted. In terms of biological role, metalloprotease. This Caenorhabditis elegans protein is Zinc metalloproteinase nas-28 (nas-28).